Here is an 83-residue protein sequence, read N- to C-terminus: Parvalbumin beta 3 (83 aa).

2 consecutive EF-hand domains span residues 13–48 (KSND…FSAG) and 52–83 (LTAG…LVKA). Residues Asp-26, Asp-28, Ser-30, Phe-32, Glu-34, Glu-37, Asp-65, Asp-67, Asp-69, Met-71, and Glu-76 each contribute to the Ca(2+) site.

It belongs to the parvalbumin family.

In muscle, parvalbumin is thought to be involved in relaxation after contraction. It binds two calcium ions. The polypeptide is Parvalbumin beta 3 (Macruronus novaezelandiae (Blue grenadier)).